We begin with the raw amino-acid sequence, 305 residues long: Olfactory receptor 4F4 (305 aa).

The Extracellular portion of the chain corresponds to 1–18 (MVTEFIFLGLSDSQELQT). Residues 19–42 (FLFMLFFVFYGGIVFGNLLIVITV) traverse the membrane as a helical segment. Residues 43–50 (VSDSHLHS) are Cytoplasmic-facing. Residues 51–72 (PMYFLLANLSLIDLSLSSVTAP) traverse the membrane as a helical segment. At 73-93 (KMITDFFSQRKVISFKGCLVQ) the chain is on the extracellular side. Cys90 and Cys182 are joined by a disulfide. The helical transmembrane segment at 94–113 (IFLLHFFGGSEMVILIAMGF) threads the bilayer. Residues 114–132 (DRYIAICKPLHYTTIMCGN) are Cytoplasmic-facing. The chain crosses the membrane as a helical span at residues 133 to 151 (ACVGIMAVAWGIGFLHSVS). The Extracellular segment spans residues 152–188 (QLAFAVHLPFCGPNEVDSFYCDLPRVIKLACTDTYRL). The chain crosses the membrane as a helical span at residues 189 to 212 (DIMVIANSGVLTVCSFVLLIISYT). Topologically, residues 213–228 (IILMTIQHCPLDKSSK) are cytoplasmic. A helical membrane pass occupies residues 229-251 (ALSTLTAHITVVLLFFGPCVFIY). Over 252–262 (AWPFPIKSLDK) the chain is Extracellular. Residues 263-282 (FLAVFYSVITPLLNPIIYTL) form a helical membrane-spanning segment. Residues 283–305 (RNKDMKTAIRRLRKWDAHSSVKF) are Cytoplasmic-facing.

The protein belongs to the G-protein coupled receptor 1 family.

It localises to the cell membrane. Odorant receptor. This is Olfactory receptor 4F4 (OR4F4) from Homo sapiens (Human).